A 729-amino-acid chain; its full sequence is Catalase-peroxidase (729 aa).

The disordered stretch occupies residues 1–24 (MDAKTNDGKAGQCPFTSGRGHKNR). A cross-link (tryptophyl-tyrosyl-methioninium (Trp-Tyr) (with M-243)) is located at residues 95-217 (WHSAGTYRIT…LAAVQMGLIY (123 aa)). His-96 functions as the Proton acceptor in the catalytic mechanism. Residues 217–243 (YVNPEGPNGQPDPLAAAKDIRETFLRM) constitute a cross-link (tryptophyl-tyrosyl-methioninium (Tyr-Met) (with W-95)). His-258 provides a ligand contact to heme b.

Belongs to the peroxidase family. Peroxidase/catalase subfamily. In terms of assembly, homodimer or homotetramer. Requires heme b as cofactor. Post-translationally, formation of the three residue Trp-Tyr-Met cross-link is important for the catalase, but not the peroxidase activity of the enzyme.

The catalysed reaction is H2O2 + AH2 = A + 2 H2O. The enzyme catalyses 2 H2O2 = O2 + 2 H2O. Functionally, bifunctional enzyme with both catalase and broad-spectrum peroxidase activity. The polypeptide is Catalase-peroxidase (Nitrobacter winogradskyi (strain ATCC 25391 / DSM 10237 / CIP 104748 / NCIMB 11846 / Nb-255)).